A 344-amino-acid chain; its full sequence is Tripartite motif-containing protein 44 (344 aa).

Disordered stretches follow at residues 1–25 (MASG…EPDE) and 66–165 (AWTP…EFDP). The span at 75–92 (GAGKEEAEVKVEQEREIE) shows a compositional bias: basic and acidic residues. Acidic residues predominate over residues 93–165 (SEAGEESESE…ETEAESEFDP (73 aa)). The segment at 174–215 (VAKRKCPDHGLDLSTYCQEDRQLICVLCPVIGAHQGHQLSTL) adopts a B box-type zinc-finger fold. Residues Cys-179, His-182, Cys-201, and His-207 each coordinate Zn(2+). Residues 290–325 (AHVTEILADIQSHMDRLMTQMAQAKEQLDTSNESAE) are a coiled coil. Positions 309–344 (QMAQAKEQLDTSNESAEPKAEGDEEGPSGASEEEDT) are disordered. A compositionally biased stretch (acidic residues) spans 330–344 (GDEEGPSGASEEEDT). Residues Ser-336 and Ser-339 each carry the phosphoserine modification.

As to quaternary structure, interacts (via coiled coil) with TRIM17 (via coiled coil). In terms of tissue distribution, highly expressed in testis.

Functionally, may play a role in the process of differentiation and maturation of neuronal cells. May regulate the activity of TRIM17. Is a negative regulator of PAX6 expression. The sequence is that of Tripartite motif-containing protein 44 (TRIM44) from Homo sapiens (Human).